The primary structure comprises 184 residues: Peptide deformylase (184 aa).

Fe cation is bound by residues Cys111 and His154. Residue Glu155 is part of the active site. His158 provides a ligand contact to Fe cation.

The protein belongs to the polypeptide deformylase family. It depends on Fe(2+) as a cofactor.

It catalyses the reaction N-terminal N-formyl-L-methionyl-[peptide] + H2O = N-terminal L-methionyl-[peptide] + formate. Removes the formyl group from the N-terminal Met of newly synthesized proteins. Requires at least a dipeptide for an efficient rate of reaction. N-terminal L-methionine is a prerequisite for activity but the enzyme has broad specificity at other positions. In Macrococcus caseolyticus (strain JCSC5402) (Macrococcoides caseolyticum), this protein is Peptide deformylase.